Here is a 23-residue protein sequence, read N- to C-terminus: Melittin-related peptide AK-23-1 (23 aa).

Lys-23 carries the post-translational modification Lysine amide.

As to expression, expressed by the skin glands.

It localises to the secreted. This Rana arvalis (Moor frog) protein is Melittin-related peptide AK-23-1.